The following is a 534-amino-acid chain: Cytochrome P450 monooxygenase CYP4 (534 aa).

Residues 46–66 form a helical membrane-spanning segment; that stretch reads TIIFCVLMSLVGYIVSRIIWG. An N-linked (GlcNAc...) asparagine glycan is attached at Asn220. Cys477 contacts heme. N-linked (GlcNAc...) asparagine glycosylation is present at Asn515.

The protein belongs to the cytochrome P450 family. It depends on heme as a cofactor.

It is found in the membrane. It participates in secondary metabolite biosynthesis. Its function is as follows. Cytochrome P450 monooxygenase; part of the gene cluster that mediates the biosynthesis of a tyrosine-derived cytochalasan acting as a fungal signal recognized by resistant rice plants and leads to avirulence in Pi33 resistant rice cultivars. The first step in the pathway is catalyzed by the hybrid PKS-NRPS ACE1, assisted by the enoyl reductase RAP1, that are responsible for fusion of the tyrosine precursor and the polyketide backbone. The polyketide synthase module (PKS) of ACE1 is responsible for the synthesis of the polyketide backbone and the downstream nonribosomal peptide synthetase (NRPS) amidates the carboxyl end of the polyketide with the tyrosine precursor. Because ACE1 lacks a designated enoylreductase (ER) domain, the required activity is provided the enoyl reductase RAP1. Reduction by the hydrolyase ORFZ, followed by dehydration and intra-molecular Diels-Alder cyclization by the Diels-Alderase ORF3 then yield the required isoindolone-fused macrocycle. A number of oxidative steps catalyzed by the tailoring enzymes identified within the cluster, including cytochrome P450 monooxygenases CYP1 to CYP4, the FAD-linked oxidoreductase OXR2 and the short-chain dehydrogenase/reductase OXR1, are further required to afford the final cytochalasans that confer avirulence and which have still to be identified. The monooxygenase CYP1 has been shown to be a site-selective C-18 hydroxylase whereas the function of CYP3 is the site-selective epoxidation of the C-6/C-7 olefin that is present in some intermediate compounds. Finally, SYN2 and RAP2 are not required for avirulence in Pi33 resistant rice cultivars. The polypeptide is Cytochrome P450 monooxygenase CYP4 (Pyricularia oryzae (strain 70-15 / ATCC MYA-4617 / FGSC 8958) (Rice blast fungus)).